A 121-amino-acid chain; its full sequence is MFDTASLKYDANGLIPAIAQDHQSGEVLMMAWMNAEAVRQTLDSGRVTYWSRSRQGFWVKGESSGHVQKLVELRVDCDRDCLLLLVDQTGPACHTNRRSCFYTAIREGQEVVIMAPQNPSA.

D76 lines the Mg(2+) pocket. Zn(2+) is bound at residue C77. Positions 78 and 80 each coordinate Mg(2+). Zn(2+)-binding residues include C93 and C100.

The protein belongs to the PRA-CH family. Homodimer. Mg(2+) is required as a cofactor. The cofactor is Zn(2+).

The protein resides in the cytoplasm. The enzyme catalyses 1-(5-phospho-beta-D-ribosyl)-5'-AMP + H2O = 1-(5-phospho-beta-D-ribosyl)-5-[(5-phospho-beta-D-ribosylamino)methylideneamino]imidazole-4-carboxamide. Its pathway is amino-acid biosynthesis; L-histidine biosynthesis; L-histidine from 5-phospho-alpha-D-ribose 1-diphosphate: step 3/9. Catalyzes the hydrolysis of the adenine ring of phosphoribosyl-AMP. This is Phosphoribosyl-AMP cyclohydrolase from Paracoccus denitrificans (strain Pd 1222).